We begin with the raw amino-acid sequence, 85 residues long: DNA-directed RNA polymerase subunit omega (85 aa).

It belongs to the RNA polymerase subunit omega family. The RNAP catalytic core consists of 2 alpha, 1 beta, 1 beta' and 1 omega subunit. When a sigma factor is associated with the core the holoenzyme is formed, which can initiate transcription.

The enzyme catalyses RNA(n) + a ribonucleoside 5'-triphosphate = RNA(n+1) + diphosphate. In terms of biological role, promotes RNA polymerase assembly. Latches the N- and C-terminal regions of the beta' subunit thereby facilitating its interaction with the beta and alpha subunits. This is DNA-directed RNA polymerase subunit omega from Latilactobacillus sakei subsp. sakei (strain 23K) (Lactobacillus sakei subsp. sakei).